A 316-amino-acid polypeptide reads, in one-letter code: MQSRAVILKYRSGSGHKRSLPRFYIDCDLDTFDFEKDCSLIENEFPIYINNYKVVYKSKPTLSHFLIEKEFPAVLGPGMISAVRTRLYEPTMRELYQESIHQLKRSNKKYLLSALRWPTGIPTLEFIDYYFEELLFLSEFDPGSIQRYLKLLVKASGLYNSTNEEQIVEIHRRVLIEGKKHGLTAFDLPGNDILGDICVVQAARVTRLVAKTFSKMTRDTHLMIYFSISPVELVLSKLDKKGDKRAKAKGLMSMSAARSYDYFMRTDLGFRETALSTFWAKDWPTPQETILSDKRCLKEDMRVTKWLPSPPHYPPL.

This sequence belongs to the phlebovirus NS-S protein family. As to quaternary structure, interacts with host RIGI; this interaction targets RIGI to proteasomal degradation. Interacts with host EIF2AK2/PKR; this interaction leads to the proteasomal degradation of host EIF2AK2/PKR.

Promotes the proteasomal degradation of host EIF2AK2/PKR but is unable to suppress host general transcription. Prevents the establishment of the host antiviral state by interfering with beta interferon (IFN-beta) production. Interacts with host RIGI and targets it for proteasomal degradation, thereby inhibiting RIGI-mediated signaling pathway. In Toscana virus (Tos), this protein is Non-structural protein NS-S (NSS).